The following is a 331-amino-acid chain: C4-dicarboxylate-binding periplasmic protein DctP (331 aa).

Residues 1-23 (MLKHTAKALVCALSLTVAGIVQA) form the signal peptide.

It belongs to the bacterial solute-binding protein 7 family. The complex comprises the extracytoplasmic solute receptor protein DctP, and the two transmembrane proteins DctQ and DctM.

It is found in the periplasm. In terms of biological role, part of the tripartite ATP-independent periplasmic (TRAP) transport system DctPQM involved in C4-dicarboxylates uptake. The sequence is that of C4-dicarboxylate-binding periplasmic protein DctP from Pseudomonas aeruginosa (strain ATCC 15692 / DSM 22644 / CIP 104116 / JCM 14847 / LMG 12228 / 1C / PRS 101 / PAO1).